The sequence spans 335 residues: E3 ubiquitin-protein ligase NLA (335 aa).

The SPX domain maps to 1–154; the sequence is MKFCKKYEEY…ESRQGQAFKT (154 aa). An RING-type zinc finger spans residues 231 to 280; that stretch reads CSICLDTVFDPISLTCGHIYCYMCACSAASVNVVDGLKTAEATEKCPLCR.

As to quaternary structure, interacts with UBC8. Interacts with PHT1-1 and PHT1-4. Forms homodimers (via RING domain). Interacts with UBC24/PHO2. Interacts with NPF2.13/NRT1.7. Interacts with NAC92/ORE1. High expression in roots and stems, medium in seedlings, flowers, rosette and cauline leaves, and very low in siliques. Detected in cotyledons, hypocotyls, pedicel, receptacle, pistil, sepal, filament of stamen and at the two ends of developing siliques.

It localises to the nucleus speckle. Its subcellular location is the nucleus. It is found in the cell membrane. The catalysed reaction is S-ubiquitinyl-[E2 ubiquitin-conjugating enzyme]-L-cysteine + [acceptor protein]-L-lysine = [E2 ubiquitin-conjugating enzyme]-L-cysteine + N(6)-ubiquitinyl-[acceptor protein]-L-lysine.. It functions in the pathway protein modification; protein ubiquitination. E3 ubiquitin-protein ligase that mediates E2-dependent protein ubiquitination. Plays a role in salicylic acid-mediated negative feedback regulation of salicylic acid (SA) accumulation. May be involved in the overall regulation of SA, benzoic acid and phenylpropanoid biosynthesis. Involved in defense response. May act as negative regulator of resistance to the necrotrophic fungal pathogen Plectosphaerella cucumerina by modulating the accumulation of the phytoalexin camalexin and the salicylic acid- and jasmonate- dependent defense pathways. Controls the adaptability to nitrogen limitation by channeling the phenylpropanoid metabolic flux to the induced anthocyanin synthesis. Involved in the regulation of inorganic phosphate (Pi) homeostasis in a nitrate-dependent fashion. Directs the ubiquitination and subsequent degradation of the plasma membrane-localized inorganic phosphate transporters PHT1-1 and PHT1-4, to maintain phosphate homeostasis. The ubiquitination of PHTs triggers their clathrin-dependent endocytosis and trafficking to the vacuole through the endosomal pathway for degradation. Functions cooperatively with UBC24/PHO2 to regulate the abundance of PHT1-1, PHT1-2 and PHT1-3 in different subcellular compartments. Regulates Pi homeostasis by mediating, cooperatively with UBC24/PHO2, polyubiquitination of PHT1-4 and its targeting for degradation. Directs the polyubiquitination and subsequent degradation of the plasma membrane-localized nitrate transporter NPF2.13/NRT1.7, to help plants to adapt to nitrogen deficiency by regulating the source-to-sink remobilization of nitrate. Regulates leaf senescence during nitrogen deficiency by mediating, cooperatively with UBC24/PHO2, polyubiquitination of NAC92/ORE1 and its targeting for degradation. This is E3 ubiquitin-protein ligase NLA from Arabidopsis thaliana (Mouse-ear cress).